A 198-amino-acid chain; its full sequence is NAD(P)H dehydrogenase (quinone) (198 aa).

The Flavodoxin-like domain maps to I4–V189. FMN is bound by residues S10–I15 and T78–F80. Y12 provides a ligand contact to NAD(+). W98 serves as a coordination point for substrate. FMN is bound by residues S113–G118 and H133.

The protein belongs to the WrbA family. It depends on FMN as a cofactor.

The enzyme catalyses a quinone + NADH + H(+) = a quinol + NAD(+). It carries out the reaction a quinone + NADPH + H(+) = a quinol + NADP(+). The sequence is that of NAD(P)H dehydrogenase (quinone) from Salmonella paratyphi C (strain RKS4594).